The sequence spans 256 residues: Isoprenyl transferase (256 aa).

Residue aspartate 33 is part of the active site. Aspartate 33 is a Mg(2+) binding site. Substrate is bound by residues 34–37 (GNGR), tryptophan 38, arginine 46, histidine 50, and 78–80 (STE). The active-site Proton acceptor is the asparagine 81. Substrate-binding positions include tryptophan 82, arginine 84, arginine 201, and 207–209 (RIS). Glutamate 220 contacts Mg(2+).

Belongs to the UPP synthase family. As to quaternary structure, homodimer. Requires Mg(2+) as cofactor.

In terms of biological role, catalyzes the condensation of isopentenyl diphosphate (IPP) with allylic pyrophosphates generating different type of terpenoids. The protein is Isoprenyl transferase of Staphylococcus aureus (strain COL).